We begin with the raw amino-acid sequence, 252 residues long: Flagellar L-ring protein (252 aa).

Positions 1 to 25 (MLKLASLNRIVLTGTLLAAAGLASG) are cleaved as a signal peptide. The N-palmitoyl cysteine moiety is linked to residue cysteine 26. A lipid anchor (S-diacylglycerol cysteine) is attached at cysteine 26.

It belongs to the FlgH family. The basal body constitutes a major portion of the flagellar organelle and consists of four rings (L,P,S, and M) mounted on a central rod.

It localises to the cell outer membrane. The protein localises to the bacterial flagellum basal body. Its function is as follows. Assembles around the rod to form the L-ring and probably protects the motor/basal body from shearing forces during rotation. This is Flagellar L-ring protein from Nitrobacter winogradskyi (strain ATCC 25391 / DSM 10237 / CIP 104748 / NCIMB 11846 / Nb-255).